The primary structure comprises 94 residues: Integration host factor subunit beta (94 aa).

It belongs to the bacterial histone-like protein family. Heterodimer of an alpha and a beta chain.

This protein is one of the two subunits of integration host factor, a specific DNA-binding protein that functions in genetic recombination as well as in transcriptional and translational control. This chain is Integration host factor subunit beta, found in Yersinia pseudotuberculosis serotype O:1b (strain IP 31758).